A 288-amino-acid chain; its full sequence is Undecaprenyl-diphosphatase (288 aa).

8 consecutive transmembrane segments (helical) span residues Leu-11–Ile-31, Pro-49–Phe-69, Ala-94–Ile-114, Leu-129–Leu-149, Leu-159–Val-179, Ala-199–Leu-219, Val-234–Leu-254, and Phe-265–Leu-285.

This sequence belongs to the UppP family.

It is found in the cell inner membrane. The catalysed reaction is di-trans,octa-cis-undecaprenyl diphosphate + H2O = di-trans,octa-cis-undecaprenyl phosphate + phosphate + H(+). Its function is as follows. Catalyzes the dephosphorylation of undecaprenyl diphosphate (UPP). Confers resistance to bacitracin. The polypeptide is Undecaprenyl-diphosphatase (Synechococcus elongatus (strain ATCC 33912 / PCC 7942 / FACHB-805) (Anacystis nidulans R2)).